The following is a 138-amino-acid chain: RuBisCO chaperone RbcX (138 aa).

Residues 118-138 are disordered; the sequence is VDNFPSETSNGESNNNDSPPS. Over residues 122-138 the composition is skewed to polar residues; sequence PSETSNGESNNNDSPPS.

Belongs to the RbcX family. Homodimer. Interacts with the exposed C-terminal peptide of RbcL via its central cleft, contacts a second RbcL monomer via its peripheral polar surface.

It is found in the carboxysome. The protein resides in the cytoplasm. Its function is as follows. An RbcL-specific chaperone. The central cleft of the RbcX homodimer (RbcX2) binds the C-terminus of an RbcL monomer, stabilizing the C-terminus and probably preventing its reassociation with chaperonin GroEL-ES. At the same time the peripheral region of RbcX2 binds a second RbcL monomer, bridging the RbcL homodimers in the correct orientation. The RbcX2(2)-bound RbcL dimers then assemble into the RbcL8 core (RbcL8-(RbcX2)8). RbcS binding triggers the release of RbcX2. The polypeptide is RuBisCO chaperone RbcX (Synechocystis sp. (strain ATCC 27184 / PCC 6803 / Kazusa)).